The following is a 1624-amino-acid chain: Reverse gyrase (1624 aa).

The RG N-terminal-type zinc finger occupies 1 to 42 (MKAIYRGMCPNCRGAITDERLSNKNPCEGCLSEPILSEDYNE). Zn(2+) contacts are provided by Cys-9, Cys-12, Cys-27, and Cys-30. ATP contacts are provided by residues Gln-89 and 106–113 (APTGMGKS). Positions 93–256 (VKRIIRGKSF…KLKKQLAKLL (164 aa)) constitute a Helicase ATP-binding domain. Residues 213–216 (DDVD) carry the DEAD box motif. Positions 636–1624 (DLVKSALMIV…LYEEIKRYVR (989 aa)) are topoisomerase I. One can recognise a Toprim domain in the interval 640–803 (SALMIVESPN…NIKRIEFHEV (164 aa)). Glu-646 is a Mg(2+) binding site. The segment at 720–749 (IKRCRDCGHQFVDWEQKGVCPRCGSRNVHD) adopts an RG C-terminal-type zinc-finger fold. 4 residues coordinate Zn(2+): Cys-723, Cys-726, Cys-739, and Cys-742. Asp-772 contacts Mg(2+). In terms of domain architecture, Topo IA-type catalytic spans 819–1623 (NEDRVNAQLV…ELYEEIKRYV (805 aa)). The DOD-type homing endonuclease domain occupies 1107-1222 (IFGVILGKGT…LSVYLYQIGI (116 aa)). The active-site O-(5'-phospho-DNA)-tyrosine intermediate is the Tyr-1366.

It in the N-terminal section; belongs to the DEAD box helicase family. DDVD subfamily. This sequence in the C-terminal section; belongs to the type IA topoisomerase family. As to quaternary structure, monomer. Zn(2+) is required as a cofactor. It depends on Mg(2+) as a cofactor. Post-translationally, this protein undergoes a protein self splicing that involves a post-translational excision of the intervening region (intein) followed by peptide ligation.

It localises to the cytoplasm. The catalysed reaction is ATP + H2O = ADP + phosphate + H(+). Functionally, modifies the topological state of DNA by introducing positive supercoils in an ATP-dependent process, increasing the linking number in steps of +1. Binds to single-stranded DNA, transiently cleaves and then rejoins the ends, introducing a positive supercoil in the process. The scissile phosphodiester is attacked by the catalytic tyrosine of the enzyme, resulting in the formation of a DNA-(5'-phosphotyrosyl)-enzyme intermediate. Probably involved in rewinding DNA strands in regions of the chromosome that have opened up to allow replication, transcription, DNA repair and/or for DNA protection. The chain is Reverse gyrase from Pyrococcus horikoshii (strain ATCC 700860 / DSM 12428 / JCM 9974 / NBRC 100139 / OT-3).